A 504-amino-acid polypeptide reads, in one-letter code: Protein Dok-7 (504 aa).

Residues 4–109 (AALVEGQVKL…WDARIRYALG (106 aa)) enclose the PH domain. The IRS-type PTB domain occupies 105-210 (RYALGEVHRF…RGISPTKGPF (106 aa)). Disordered stretches follow at residues 210-229 (FGLR…TVEE), 249-351 (SHAG…YSSS), and 411-483 (LCLA…PHAG). Composition is skewed to low complexity over residues 263–279 (LSSS…SASS) and 288–310 (SSSS…AGEA). Residues 331–341 (GRQSSSDSGIA) show a composition bias toward polar residues.

As to quaternary structure, homodimer. Forms a heterotetramer composed of 2 DOK7 and 2 MUSK molecules which facilitates MUSK trans-autophosphorylation on tyrosine residue and activation. Interacts (via IRS-type PTB domain) with MUSK (via cytoplasmic part); requires MUSK phosphorylation. In terms of tissue distribution, preferentially expressed in skeletal muscle and heart. Present in thigh muscle, diaphragm and heart but not in the liver or spleen (at protein level).

It localises to the cell membrane. It is found in the synapse. Its function is as follows. Probable muscle-intrinsic activator of MUSK that plays an essential role in neuromuscular synaptogenesis. Acts in aneural activation of MUSK and subsequent acetylcholine receptor (AchR) clustering in myotubes. Induces autophosphorylation of MUSK. This chain is Protein Dok-7 (DOK7), found in Homo sapiens (Human).